A 461-amino-acid chain; its full sequence is L-seryl-tRNA(Sec) selenium transferase (461 aa).

An N6-(pyridoxal phosphate)lysine modification is found at lysine 294.

This sequence belongs to the SelA family. Pyridoxal 5'-phosphate is required as a cofactor.

It localises to the cytoplasm. It carries out the reaction L-seryl-tRNA(Sec) + selenophosphate + H(+) = L-selenocysteinyl-tRNA(Sec) + phosphate. The protein operates within aminoacyl-tRNA biosynthesis; selenocysteinyl-tRNA(Sec) biosynthesis; selenocysteinyl-tRNA(Sec) from L-seryl-tRNA(Sec) (bacterial route): step 1/1. Converts seryl-tRNA(Sec) to selenocysteinyl-tRNA(Sec) required for selenoprotein biosynthesis. This Actinobacillus pleuropneumoniae serotype 5b (strain L20) protein is L-seryl-tRNA(Sec) selenium transferase.